We begin with the raw amino-acid sequence, 125 residues long: Large ribosomal subunit protein bL12 (125 aa).

It belongs to the bacterial ribosomal protein bL12 family. As to quaternary structure, homodimer. Part of the ribosomal stalk of the 50S ribosomal subunit. Forms a multimeric L10(L12)X complex, where L10 forms an elongated spine to which 2 to 4 L12 dimers bind in a sequential fashion. Binds GTP-bound translation factors.

Forms part of the ribosomal stalk which helps the ribosome interact with GTP-bound translation factors. Is thus essential for accurate translation. The chain is Large ribosomal subunit protein bL12 from Dictyoglomus thermophilum (strain ATCC 35947 / DSM 3960 / H-6-12).